Consider the following 651-residue polypeptide: Transcription termination factor FttA (651 aa).

Residues methionine 1–valine 200 are archaeal CPSF-KH domain. The tract at residues aspartate 12–leucine 79 is KHa. The interval leucine 80–proline 147 is KHb. The segment at tryptophan 188–alanine 398 is metallo-beta-lactamase N-terminus. Positions 256, 258, 260, 261, 344, and 367 each coordinate Zn(2+). The interval asparagine 399 to serine 592 is beta-Casp. Positions glycine 593–arginine 651 are metallo-beta-lactamase C-terminus. Histidine 618 serves as a coordination point for Zn(2+).

The protein belongs to the metallo-beta-lactamase superfamily. RNA-metabolizing metallo-beta-lactamase-like family. FttA subfamily. In terms of assembly, homodimer. Interacts with RNA polymerase (RNAP), interacts with the Spt4-Spt5 complex. It depends on Zn(2+) as a cofactor.

Functionally, terminates transcription on the whole genome. Termination is linked to FttA-mediated RNA cleavage and does not require NTP hydrolysis. Cleaves endonucleolytically at the RNA exit channel of RNA polymerase (RNAP); the 5'-3' exonuclease activity of this protein degrades the nascent RNA released from RNAP. Has nuclease activity on single-stranded RNA. This is Transcription termination factor FttA from Pyrococcus horikoshii (strain ATCC 700860 / DSM 12428 / JCM 9974 / NBRC 100139 / OT-3).